The following is a 586-amino-acid chain: FAD-linked oxidoreductase orf1 (586 aa).

The signal sequence occupies residues 1-17 (MKSFATTVLLVTPGIYA). Asn-29, Asn-51, Asn-79, Asn-110, Asn-146, Asn-188, Asn-314, Asn-321, Asn-358, Asn-402, Asn-434, and Asn-461 each carry an N-linked (GlcNAc...) asparagine glycan. The 180-residue stretch at 124–303 (TLGNYVSYAI…LSMTAKVHPD (180 aa)) folds into the FAD-binding PCMH-type domain.

It belongs to the oxygen-dependent FAD-linked oxidoreductase family.

The catalysed reaction is betaenone C = betaenone A. The protein operates within mycotoxin biosynthesis. Functionally, FAD-linked oxidoreductase; part of the gene cluster that mediates the biosynthesis of betaenones, phytotoxic polyketides involved in leaf spot disease in sugar beets. The first step of the pathway is the synthesis of dehydroprobetaenone I by the polyketide synthase bet1 and the enoyl reductase bet3 via condensation of one acetyl-CoA starter unit with 7 malonyl-CoA units and 5 methylations. The C-terminal reductase (R) domain of bet1 catalyzes the reductive release of the polyketide chain. Because bet1 lacks a designated enoylreductase (ER) domain, the required activity is provided the enoyl reductase bet3. The short-chain dehydrogenase/reductase bet4 then catalyzes reduction of dehydroprobetaenone I to probetaenone I. The cytochrome P450 monooxygenase bet2 catalyzes successive epoxidation, oxidation (resulting from epoxide opening) and hydroxylation to install a tertiary alcohol in the decaline ring to yield betaenone C from dehydroprobetaenone I and betaenone B from probetaenone I. The FAD-linked oxidoreductase (orf1) is probably responsible for the conversion of betaenone C to betaenone A via an intramolecular aldol reaction between C-1 and C-17 to form the bridged tricyclic system in betaenone A. This chain is FAD-linked oxidoreductase orf1, found in Neocamarosporium betae (Beet black rot fungus).